The sequence spans 307 residues: Aspartate carbamoyltransferase catalytic subunit (307 aa).

Carbamoyl phosphate contacts are provided by Arg-59 and Thr-60. Lys-87 contributes to the L-aspartate binding site. 3 residues coordinate carbamoyl phosphate: Arg-109, His-137, and Gln-140. L-aspartate contacts are provided by Arg-170 and Arg-224. Carbamoyl phosphate-binding residues include Gly-265 and Pro-266.

This sequence belongs to the aspartate/ornithine carbamoyltransferase superfamily. ATCase family. As to quaternary structure, heterododecamer (2C3:3R2) of six catalytic PyrB chains organized as two trimers (C3), and six regulatory PyrI chains organized as three dimers (R2).

The enzyme catalyses carbamoyl phosphate + L-aspartate = N-carbamoyl-L-aspartate + phosphate + H(+). It functions in the pathway pyrimidine metabolism; UMP biosynthesis via de novo pathway; (S)-dihydroorotate from bicarbonate: step 2/3. In terms of biological role, catalyzes the condensation of carbamoyl phosphate and aspartate to form carbamoyl aspartate and inorganic phosphate, the committed step in the de novo pyrimidine nucleotide biosynthesis pathway. The chain is Aspartate carbamoyltransferase catalytic subunit from Cytophaga hutchinsonii (strain ATCC 33406 / DSM 1761 / CIP 103989 / NBRC 15051 / NCIMB 9469 / D465).